The chain runs to 570 residues: Proline--tRNA ligase (570 aa).

This sequence belongs to the class-II aminoacyl-tRNA synthetase family. ProS type 1 subfamily. In terms of assembly, homodimer.

Its subcellular location is the cytoplasm. The enzyme catalyses tRNA(Pro) + L-proline + ATP = L-prolyl-tRNA(Pro) + AMP + diphosphate. Functionally, catalyzes the attachment of proline to tRNA(Pro) in a two-step reaction: proline is first activated by ATP to form Pro-AMP and then transferred to the acceptor end of tRNA(Pro). As ProRS can inadvertently accommodate and process non-cognate amino acids such as alanine and cysteine, to avoid such errors it has two additional distinct editing activities against alanine. One activity is designated as 'pretransfer' editing and involves the tRNA(Pro)-independent hydrolysis of activated Ala-AMP. The other activity is designated 'posttransfer' editing and involves deacylation of mischarged Ala-tRNA(Pro). The misacylated Cys-tRNA(Pro) is not edited by ProRS. This chain is Proline--tRNA ligase, found in Neisseria meningitidis serogroup C / serotype 2a (strain ATCC 700532 / DSM 15464 / FAM18).